Consider the following 81-residue polypeptide: Conotoxin Im016 (81 aa).

A signal peptide spans 1 to 21 (MSTLGMMLLILLLLVPLATFA). A propeptide spanning residues 22–31 (DDGPTMRGHR) is cleaved from the precursor.

The protein belongs to the conotoxin N superfamily. Contains 5 disulfide bonds. In terms of tissue distribution, expressed by the venom duct.

It localises to the secreted. Its function is as follows. Probable neurotoxin. This chain is Conotoxin Im016, found in Conus imperialis (Imperial cone).